The following is a 327-amino-acid chain: ATPase GET3 (327 aa).

27–34 (KGGVGKTT) serves as a coordination point for ATP. Asp56 is an active-site residue. ATP is bound by residues Glu231 and Asn258. Positions 269 and 272 each coordinate Zn(2+).

This sequence belongs to the arsA ATPase family. In terms of assembly, homodimer. Component of the Golgi to ER traffic (GET) complex, which is composed of GET1, GET2 and GET3. Within the complex, GET1 and GET2 form a heterotetramer which is stabilized by phosphatidylinositol binding and which binds to the GET3 homodimer. Interacts with the chloride channel protein GEF1.

The protein resides in the cytoplasm. It is found in the endoplasmic reticulum. It localises to the golgi apparatus. Functionally, ATPase required for the post-translational delivery of tail-anchored (TA) proteins to the endoplasmic reticulum. Recognizes and selectively binds the transmembrane domain of TA proteins in the cytosol. This complex then targets to the endoplasmic reticulum by membrane-bound receptors GET1 and GET2, where the tail-anchored protein is released for insertion. This process is regulated by ATP binding and hydrolysis. ATP binding drives the homodimer towards the closed dimer state, facilitating recognition of newly synthesized TA membrane proteins. ATP hydrolysis is required for insertion. Subsequently, the homodimer reverts towards the open dimer state, lowering its affinity for the GET1-GET2 receptor, and returning it to the cytosol to initiate a new round of targeting. Cooperates with the HDEL receptor ERD2 to mediate the ATP-dependent retrieval of resident ER proteins that contain a C-terminal H-D-E-L retention signal from the Golgi to the ER. Involved in low-level resistance to the oxyanions arsenite and arsenate, and in heat tolerance. This chain is ATPase GET3, found in Yarrowia lipolytica (strain CLIB 122 / E 150) (Yeast).